The following is a 499-amino-acid chain: Probable cytosol aminopeptidase (499 aa).

Lys269 and Asp274 together coordinate Mn(2+). Lys281 is an active-site residue. Asp292, Asp351, and Glu353 together coordinate Mn(2+). Arg355 is a catalytic residue.

The protein belongs to the peptidase M17 family. It depends on Mn(2+) as a cofactor.

It localises to the cytoplasm. The enzyme catalyses Release of an N-terminal amino acid, Xaa-|-Yaa-, in which Xaa is preferably Leu, but may be other amino acids including Pro although not Arg or Lys, and Yaa may be Pro. Amino acid amides and methyl esters are also readily hydrolyzed, but rates on arylamides are exceedingly low.. The catalysed reaction is Release of an N-terminal amino acid, preferentially leucine, but not glutamic or aspartic acids.. In terms of biological role, presumably involved in the processing and regular turnover of intracellular proteins. Catalyzes the removal of unsubstituted N-terminal amino acids from various peptides. This Actinobacillus pleuropneumoniae serotype 3 (strain JL03) protein is Probable cytosol aminopeptidase.